We begin with the raw amino-acid sequence, 819 residues long: DNA topoisomerase 4 subunit A (819 aa).

Residues 30–496 form the Topo IIA-type catalytic domain; it reads LPDIRDGLKP…QIIEIDTASL (467 aa). Tyr-118 functions as the O-(5'-phospho-DNA)-tyrosine intermediate in the catalytic mechanism.

Belongs to the type II topoisomerase GyrA/ParC subunit family. ParC type 2 subfamily. Heterotetramer composed of ParC and ParE.

It localises to the cell membrane. The catalysed reaction is ATP-dependent breakage, passage and rejoining of double-stranded DNA.. Functionally, topoisomerase IV is essential for chromosome segregation. It relaxes supercoiled DNA. Performs the decatenation events required during the replication of a circular DNA molecule. The chain is DNA topoisomerase 4 subunit A from Streptococcus pyogenes serotype M3 (strain SSI-1).